The primary structure comprises 614 residues: Zinc finger protein 276 (614 aa).

The tract at residues 1 to 50 (MKRDRLGRFLSPGSSRQCGASDGGGGVSRTRGRPSLSGGPRVDGATARRA) is disordered. The region spanning 77-163 (GHCRLCHGKF…LQRVNASPAG (87 aa)) is the ZAD domain. 4 residues coordinate Zn(2+): Cys79, Cys82, Cys136, and Cys139. The interval 268-420 (APRLPQHRGW…KKPGPKPGWK (153 aa)) is disordered. Positions 357–369 (SDLSEGDVLSEDE) are enriched in acidic residues. Basic and acidic residues predominate over residues 386-408 (YPERKVSGKKSESKEAKKSEEPR). Basic residues predominate over residues 409–420 (IRKKPGPKPGWK). 5 consecutive C2H2-type zinc fingers follow at residues 434 to 458 (YKCP…IKEH), 465 to 490 (RPCP…KLIH), 496 to 518 (YICD…QMRH), 524 to 546 (LQCE…MTKH), and 554 to 577 (FACD…SMVH). The interval 583 to 614 (QDKALPLEAEPPPGPPSPSVTTEGQAVKPEPT) is disordered. A compositionally biased stretch (pro residues) spans 591 to 600 (AEPPPGPPSP).

It is found in the nucleus. Its subcellular location is the chromosome. It localises to the centromere. The protein resides in the kinetochore. May be involved in transcriptional regulation. The chain is Zinc finger protein 276 (ZNF276) from Homo sapiens (Human).